The following is an 800-amino-acid chain: Phenylalanine--tRNA ligase beta subunit (800 aa).

Residues 39–154 (TKDIKKLVVG…EAVKPGTDAL (116 aa)) enclose the tRNA-binding domain. Positions 408–483 (SFVTPIKITA…RIYGYDDIPS (76 aa)) constitute a B5 domain. Residues Asp-461, Asp-467, Glu-470, and Glu-471 each contribute to the Mg(2+) site. In terms of domain architecture, FDX-ACB spans 708–800 (PRFPGVTRDI…ALKKHGAIIR (93 aa)).

The protein belongs to the phenylalanyl-tRNA synthetase beta subunit family. Type 1 subfamily. In terms of assembly, tetramer of two alpha and two beta subunits. The cofactor is Mg(2+).

It localises to the cytoplasm. The enzyme catalyses tRNA(Phe) + L-phenylalanine + ATP = L-phenylalanyl-tRNA(Phe) + AMP + diphosphate + H(+). This Staphylococcus epidermidis (strain ATCC 35984 / DSM 28319 / BCRC 17069 / CCUG 31568 / BM 3577 / RP62A) protein is Phenylalanine--tRNA ligase beta subunit.